The following is a 678-amino-acid chain: DNA gyrase subunit B (678 aa).

The region spanning 456–570 (SELYVVEGDS…HGYVFLAQPP (115 aa)) is the Toprim domain. Positions 462, 535, and 537 each coordinate Mg(2+).

It belongs to the type II topoisomerase GyrB family. As to quaternary structure, heterotetramer, composed of two GyrA and two GyrB chains. In the heterotetramer, GyrA contains the active site tyrosine that forms a transient covalent intermediate with the DNA, while GyrB binds cofactors catalyzes ATP hydrolysis. Requires Mg(2+) as cofactor. Mn(2+) serves as cofactor. Ca(2+) is required as a cofactor.

The protein resides in the cytoplasm. It catalyses the reaction ATP-dependent breakage, passage and rejoining of double-stranded DNA.. With respect to regulation, DNA supercoiling is inhibited by fluoroquinolones; IC(50) 1 ug/ml for sitafloxacin. A type II topoisomerase that negatively supercoils closed circular double-stranded (ds) DNA in an ATP-dependent manner to modulate DNA topology and maintain chromosomes in an underwound state. Negative supercoiling favors strand separation, and DNA replication, transcription, recombination and repair, all of which involve strand separation. Also able to catalyze the interconversion of other topological isomers of dsDNA rings, including catenanes and knotted rings. Type II topoisomerases break and join 2 DNA strands simultaneously in an ATP-dependent manner. This Mycobacterium leprae (strain TN) protein is DNA gyrase subunit B.